The following is a 483-amino-acid chain: Probable apyrase 3 (483 aa).

Residues 1-29 (MTPETDALKVQILPKHQSLPYTVTKAKSK) are Cytoplasmic-facing. Residues 30 to 50 (SLILLVVVSVTITLGLLLYVF) traverse the membrane as a helical; Signal-anchor for type II membrane protein segment. Residues 51-483 (NSNSVISSGS…NGKSRKYLGF (433 aa)) lie on the Extracellular side of the membrane. 72-82 (VLIDAGSSGTR) contacts ATP. The active-site Proton acceptor is Glu195. Residue 219–229 (GIVELGGASAQ) coordinates ATP. N-linked (GlcNAc...) asparagine glycosylation is found at Asn250, Asn281, Asn305, and Asn326.

It belongs to the GDA1/CD39 NTPase family. Ca(2+) serves as cofactor. As to expression, expressed in the initiation zone of lateral root and in the lateral root tip, the adaxial junction of lateral shoots with the stems, and in the abscission zone of flower organs. Not expressed in the rosette leaves.

It localises to the membrane. It carries out the reaction a ribonucleoside 5'-triphosphate + 2 H2O = a ribonucleoside 5'-phosphate + 2 phosphate + 2 H(+). In terms of biological role, catalyzes the hydrolysis of phosphoanhydride bonds of nucleoside tri- and di-phosphates. This Arabidopsis thaliana (Mouse-ear cress) protein is Probable apyrase 3 (APY3).